The chain runs to 300 residues: MILEGGGVMNLNPGNNLLHQPPAWTDSYSTCNVSSGFFGGQWHEIHPQYWTKYQVWEWLQHLLDTNQLDANCIPFQEFDINGEHLCSMSLQEFTRAAGTAGQLLYSNLQHLKWNGQCSSDLFQSTHNVIVKTEQTEPSIMNTWKDENYLYDTNYGSTVDLLDSKTFCRAQISMTTTSHLPVAESPDMKKEQDPPAKCHTKKHNPRGTHLWEFIRDILLNPDKNPGLIKWEDRSEGVFRFLKSEAVAQLWGKKKNNSSMTYEKLSRAMRYYYKREILERVDGRRLVYKFGKNARGWRENEN.

One can recognise a PNT domain in the interval 29 to 115 (STCNVSSGFF…SNLQHLKWNG (87 aa)). The disordered stretch occupies residues 183-202 (ESPDMKKEQDPPAKCHTKKH). Basic and acidic residues predominate over residues 185–195 (PDMKKEQDPPA). Residues 207-289 (THLWEFIRDI…DGRRLVYKFG (83 aa)) constitute a DNA-binding region (ETS).

The protein belongs to the ETS family. Expressed exclusively in tissues with a high content of epithelial cells. Highly expressed in salivary gland, mammary gland, prostate, and lung. Weakly expressed in kidney and colon. Not detected in heart, brain, placenta, liver, skeletal muscle, spleen, thymus, testis, ovary, small intestine or peripheral blood leukocytes.

It localises to the nucleus. In terms of biological role, transcriptional activator that may play a role in regulating epithelial cell differentiation and proliferation. May act as a repressor for a specific subset of ETS/AP-1-responsive genes and as a modulator of the nuclear response to mitogen-activated protein kinase signaling cascades. Binds to DNA sequences containing the consensus nucleotide core sequence GGAA. Involved in regulation of TNFRSF10B/DR5 expression through Ets-binding sequences on the TNFRSF10B/DR5 promoter. May contribute to development and carcinogenesis by acting as a tumor suppressor gene or anti-oncogene. The protein is ETS homologous factor of Homo sapiens (Human).